Reading from the N-terminus, the 498-residue chain is DNA-directed RNA polymerase subunit Rpo2N (498 aa).

This sequence belongs to the RNA polymerase beta chain family. Part of the RNA polymerase complex.

It localises to the cytoplasm. The catalysed reaction is RNA(n) + a ribonucleoside 5'-triphosphate = RNA(n+1) + diphosphate. Functionally, DNA-dependent RNA polymerase (RNAP) catalyzes the transcription of DNA into RNA using the four ribonucleoside triphosphates as substrates. The Rpo2 subunit (Rpo2N and Rpo2C in this organism) is implicated in DNA promoter recognition and in nucleotide binding. The chain is DNA-directed RNA polymerase subunit Rpo2N from Methanocaldococcus jannaschii (strain ATCC 43067 / DSM 2661 / JAL-1 / JCM 10045 / NBRC 100440) (Methanococcus jannaschii).